A 272-amino-acid polypeptide reads, in one-letter code: MAQNKNQTLPISIKDLLEAGAHFGHQTSRWNPKMKRFIFEERNGLYIIDLAKTLQQIRNAVDIVRDVVAKHKSILFVGTKKQAKAVLRELSEQCGEFYVCERWLGGMLTNLSTIRQSVKKLERIEKRISTGGEGLTKKEISLLTKDQIKLEKNLSGVRSMRKPPGLVIVVDPSKEHLAVAEANKLGIPVMGLVDTNCDPDPIEHVIACNDDALKSIKLILETLAKAIIDKKNDIKVYASKEEQTEEAEEETLSSKYREQDFQEAKSGARGEK.

The segment at 238 to 272 (ASKEEQTEEAEEETLSSKYREQDFQEAKSGARGEK) is disordered. Positions 255–272 (KYREQDFQEAKSGARGEK) are enriched in basic and acidic residues.

This sequence belongs to the universal ribosomal protein uS2 family.

The polypeptide is Small ribosomal subunit protein uS2 (Protochlamydia amoebophila (strain UWE25)).